A 241-amino-acid polypeptide reads, in one-letter code: Small ribosomal subunit protein uS2 (241 aa).

This sequence belongs to the universal ribosomal protein uS2 family.

The polypeptide is Small ribosomal subunit protein uS2 (Enterobacter sp. (strain 638)).